We begin with the raw amino-acid sequence, 369 residues long: Ferredoxin--NADP reductase, chloroplastic (369 aa).

Residues 1-55 constitute a chloroplast transit peptide; the sequence is MTTAVTAAVSFPSTKTTSLSARSSSVISPDKISYKKVPLYYRNVSATGKMGPIRA. Residues 90–212 form the FAD-binding FR-type domain; sequence KTPYVGRCLL…TGPVGKEMLM (123 aa). Residues 148-151, 169-171, Y175, 186-188, and T227 contribute to the FAD site; these read RLYS, CVK, and VCS. Residues S151 and K171 each contribute to the NADP(+) site. NADP(+) contacts are provided by residues T227, 259-260, 289-290, 299-301, 328-329, and E367; these read VP, SR, KMY, and GL.

Belongs to the ferredoxin--NADP reductase type 1 family. Requires FAD as cofactor.

The protein resides in the plastid. The protein localises to the chloroplast stroma. It is found in the chloroplast thylakoid membrane. It carries out the reaction 2 reduced [2Fe-2S]-[ferredoxin] + NADP(+) + H(+) = 2 oxidized [2Fe-2S]-[ferredoxin] + NADPH. The protein operates within energy metabolism; photosynthesis. In terms of biological role, may play a key role in regulating the relative amounts of cyclic and non-cyclic electron flow to meet the demands of the plant for ATP and reducing power. This chain is Ferredoxin--NADP reductase, chloroplastic (PETH), found in Spinacia oleracea (Spinach).